The chain runs to 327 residues: dTDP-4-dehydrorhamnose reductase (327 aa).

Residues 1-22 (MDLINGMGTSPGYWRTPREPGN) are disordered. NADH is bound by residues 43–45 (GMV), 69–70 (DI), and 91–93 (AYT). Residues 44–45 (MV), 69–70 (DI), and 91–93 (AYT) each bind NADPH. 132 to 133 (TD) contributes to the dTDP-beta-L-rhamnose binding site. Positions 157 and 161 each coordinate NADH. Positions 157 and 161 each coordinate NADPH. Catalysis depends on Tyr157, which acts as the Proton donor/acceptor. DTDP-beta-L-rhamnose is bound at residue Trp182. The span at 264-276 (PERVRPCGSDRHP) shows a compositional bias: basic and acidic residues. Residues 264 to 292 (PERVRPCGSDRHPRPAPRPSYTVLSSQRS) are disordered.

This sequence belongs to the dTDP-4-dehydrorhamnose reductase family. Mg(2+) serves as cofactor.

It catalyses the reaction dTDP-beta-L-rhamnose + NADP(+) = dTDP-4-dehydro-beta-L-rhamnose + NADPH + H(+). It participates in carbohydrate biosynthesis; dTDP-L-rhamnose biosynthesis. Its function is as follows. Involved in the biosynthesis of the dTDP-L-rhamnose which is a component of the critical linker, D-N-acetylglucosamine-L-rhamnose disaccharide, which connects the galactan region of arabinogalactan to peptidoglycan via a phosphodiester linkage. Catalyzes the reduction of dTDP-6-deoxy-L-lyxo-4-hexulose to yield dTDP-L-rhamnose. This is dTDP-4-dehydrorhamnose reductase from Mycolicibacterium smegmatis (strain ATCC 700084 / mc(2)155) (Mycobacterium smegmatis).